The primary structure comprises 269 residues: Expansin-B1 (269 aa).

Residues 1 to 24 form the signal peptide; the sequence is MGSLANNIMVVGAVLAALVAGGSC. An N-linked (GlcNAc...) asparagine glycan is attached at Asn-34. Residues 63 to 169 form the Expansin-like EG45 domain; sequence GGACGIKNVN…RRVRCKYPAG (107 aa). Intrachain disulfides connect Cys-66–Cys-94, Cys-97–Cys-164, and Cys-102–Cys-108. The Expansin-like CBD domain occupies 183 to 264; sequence NYLAVLVKYV…NWRPDAVYTS (82 aa).

It belongs to the expansin family. Expansin B subfamily. Expressed in anthers and pollen.

The protein localises to the secreted. Its subcellular location is the cell wall. It localises to the membrane. May aid fertilization by loosening the cell wall of the stigma and style, thereby facilitating penetration of the pollen tube. Acts selectively on grass cell walls, which are relatively poor in pectins and xyloglucans and rich in glucuronoarabinoxylans and (1-3),(1-4)-beta-D-glucans, when compared with cell walls of other angiosperms, including other monocots. The polypeptide is Expansin-B1 (EXPB1) (Zea mays (Maize)).